A 260-amino-acid chain; its full sequence is Type III pantothenate kinase (260 aa).

Position 6 to 13 (6 to 13) interacts with ATP; the sequence is DAGNTRTK. Substrate is bound by residues Tyr-88 and 95-98; that span reads GVDR. Asp-97 acts as the Proton acceptor in catalysis. Ser-121 provides a ligand contact to ATP. Residue Thr-184 participates in substrate binding.

This sequence belongs to the type III pantothenate kinase family. As to quaternary structure, homodimer. Requires NH4(+) as cofactor. K(+) serves as cofactor.

It is found in the cytoplasm. The catalysed reaction is (R)-pantothenate + ATP = (R)-4'-phosphopantothenate + ADP + H(+). It functions in the pathway cofactor biosynthesis; coenzyme A biosynthesis; CoA from (R)-pantothenate: step 1/5. Its function is as follows. Catalyzes the phosphorylation of pantothenate (Pan), the first step in CoA biosynthesis. The sequence is that of Type III pantothenate kinase from Saccharophagus degradans (strain 2-40 / ATCC 43961 / DSM 17024).